Here is a 240-residue protein sequence, read N- to C-terminus: 1-(5-phosphoribosyl)-5-[(5-phosphoribosylamino)methylideneamino] imidazole-4-carboxamide isomerase (240 aa).

The Proton acceptor role is filled by aspartate 8. The active-site Proton donor is the aspartate 129.

Belongs to the HisA/HisF family.

It localises to the cytoplasm. It carries out the reaction 1-(5-phospho-beta-D-ribosyl)-5-[(5-phospho-beta-D-ribosylamino)methylideneamino]imidazole-4-carboxamide = 5-[(5-phospho-1-deoxy-D-ribulos-1-ylimino)methylamino]-1-(5-phospho-beta-D-ribosyl)imidazole-4-carboxamide. It functions in the pathway amino-acid biosynthesis; L-histidine biosynthesis; L-histidine from 5-phospho-alpha-D-ribose 1-diphosphate: step 4/9. The protein is 1-(5-phosphoribosyl)-5-[(5-phosphoribosylamino)methylideneamino] imidazole-4-carboxamide isomerase of Oceanobacillus iheyensis (strain DSM 14371 / CIP 107618 / JCM 11309 / KCTC 3954 / HTE831).